The primary structure comprises 223 residues: Large ribosomal subunit protein uL6c (223 aa).

The transit peptide at 1–41 (MASSLVSSFQPRSAFLGDRNVFKVSSTPFAQVGYSSKTIEC) directs the protein to the chloroplast.

The protein belongs to the universal ribosomal protein uL6 family. As to quaternary structure, part of the 50S ribosomal subunit.

The protein resides in the plastid. The protein localises to the chloroplast. Functionally, this protein binds directly to 23S ribosomal RNA and is located at the aminoacyl-tRNA binding site of the peptidyltransferase center. The protein is Large ribosomal subunit protein uL6c (RPL6) of Arabidopsis thaliana (Mouse-ear cress).